A 375-amino-acid polypeptide reads, in one-letter code: Probable UDP-N-acetylglucosamine 2-epimerase (375 aa).

It belongs to the UDP-N-acetylglucosamine 2-epimerase family.

It is found in the cytoplasm. The catalysed reaction is UDP-N-acetyl-alpha-D-glucosamine = UDP-N-acetyl-alpha-D-mannosamine. Its pathway is glycan metabolism; exopolysaccharide EPS I biosynthesis. Functionally, may be involved in synthesis of N-acetyltrideoxygalactose, a component of exopolysaccharide EPS I which functions as a virulence factor. The protein is Probable UDP-N-acetylglucosamine 2-epimerase (epsC) of Ralstonia nicotianae (strain ATCC BAA-1114 / GMI1000) (Ralstonia solanacearum).